Here is a 705-residue protein sequence, read N- to C-terminus: Kinesin-like protein KIF2A (705 aa).

Residues 1 to 216 form a globular region; it reads MATANFGKIQ…LDYRPLTTAD (216 aa). A disordered region spans residues 65–186; it reads DLVPDEDIEP…QELREKRAQD (122 aa). Ser75 is subject to Phosphoserine. At Thr96 the chain carries Phosphothreonine. Lys101 bears the N6-acetyllysine mark. The span at 122-139 shows a compositional bias: polar residues; it reads LPEQSSSAQQNGSVSDIS. 2 positions are modified to phosphoserine: Ser134 and Ser139. A compositionally biased stretch (basic and acidic residues) spans 158–186; that stretch reads CVKEVEKLQEKREKRRLQQQELREKRAQD. The Kinesin motor domain maps to 222 to 552; sequence RICVCVRKRP…LRYANRVKEL (331 aa). 312 to 319 serves as a coordination point for ATP; the sequence is GQTGSGKT. Phosphoserine is present on residues Thr528 and Tyr545. Residues 659–698 adopt a coiled-coil conformation; the sequence is ATQLEAILEQKIDILTELRDKVKSFRAALQEEEQASKQIN.

This sequence belongs to the TRAFAC class myosin-kinesin ATPase superfamily. Kinesin family. MCAK/KIF2 subfamily. In terms of assembly, interacts with AURKA and PLK1. Interacts with PSRC1. Interacts with MCRS1; the interaction enhances recruitment of KIF2A to the minus ends of spindle microtubules which promotes chromosome alignment. In terms of tissue distribution, highest level in lung. High level in ovary, moderate levels in heart, kidney, placenta, skeletal muscle and spleen (at protein level). Pancreas and spleen express a shorter isoform (at protein level). Expressed in the flagellum of elongated spermatids and sperm in the testis lumen (at protein level). Isoform 1 expressed in neuronal cells. Isoform 2 expressed in astrocytes and fibroblasts.

Its subcellular location is the cytoplasm. It is found in the cytoskeleton. The protein resides in the microtubule organizing center. The protein localises to the centrosome. It localises to the spindle pole. Its subcellular location is the spindle. It is found in the lysosome. Plus end-directed microtubule-dependent motor required for normal brain development. May regulate microtubule dynamics during axonal growth. Required for normal progression through mitosis. Required for normal congress of chromosomes at the metaphase plate. Required for normal spindle dynamics during mitosis. Promotes spindle turnover. Implicated in formation of bipolar mitotic spindles. Has microtubule depolymerization activity. The sequence is that of Kinesin-like protein KIF2A (Kif2a) from Mus musculus (Mouse).